A 403-amino-acid chain; its full sequence is Putative glutamate--cysteine ligase 2 (403 aa).

The tract at residues 370–403 (ESAAQRRAPQAARRRIRASSEPLGPMSMWPERLH) is disordered.

It belongs to the glutamate--cysteine ligase type 2 family. YbdK subfamily.

It carries out the reaction L-cysteine + L-glutamate + ATP = gamma-L-glutamyl-L-cysteine + ADP + phosphate + H(+). Its function is as follows. ATP-dependent carboxylate-amine ligase which exhibits weak glutamate--cysteine ligase activity. The chain is Putative glutamate--cysteine ligase 2 from Bordetella avium (strain 197N).